Here is a 231-residue protein sequence, read N- to C-terminus: ATP-dependent dethiobiotin synthetase BioD 2 (231 aa).

Serine 13–valine 18 is an ATP binding site. Residue threonine 17 participates in Mg(2+) binding. The active site involves lysine 38. Residues aspartate 55, glutamate 112–glycine 115, asparagine 172–arginine 173, proline 201–leucine 203, and glutamine 208 contribute to the ATP site. Aspartate 55 and glutamate 112 together coordinate Mg(2+).

The protein belongs to the dethiobiotin synthetase family. As to quaternary structure, homodimer. Mg(2+) is required as a cofactor.

The protein localises to the cytoplasm. The catalysed reaction is (7R,8S)-7,8-diammoniononanoate + CO2 + ATP = (4R,5S)-dethiobiotin + ADP + phosphate + 3 H(+). The protein operates within cofactor biosynthesis; biotin biosynthesis; biotin from 7,8-diaminononanoate: step 1/2. Functionally, catalyzes a mechanistically unusual reaction, the ATP-dependent insertion of CO2 between the N7 and N8 nitrogen atoms of 7,8-diaminopelargonic acid (DAPA, also called 7,8-diammoniononanoate) to form a ureido ring. In Salmonella typhimurium (strain LT2 / SGSC1412 / ATCC 700720), this protein is ATP-dependent dethiobiotin synthetase BioD 2.